The chain runs to 349 residues: tRNA pseudouridine synthase D (349 aa).

Phe-27 is a substrate binding site. The active-site Nucleophile is Asp-80. Asn-129 provides a ligand contact to substrate. Positions 155–303 (GVPNYFGAQR…VEAARRAMLL (149 aa)) constitute a TRUD domain. Phe-329 is a substrate binding site.

Belongs to the pseudouridine synthase TruD family.

The catalysed reaction is uridine(13) in tRNA = pseudouridine(13) in tRNA. Its function is as follows. Responsible for synthesis of pseudouridine from uracil-13 in transfer RNAs. This is tRNA pseudouridine synthase D from Escherichia coli O6:K15:H31 (strain 536 / UPEC).